The chain runs to 144 residues: MKKVEIFTDGACKGNPGPGGWGVLLRMGKHEKELSGGEPETTNNRMELRAAIEGLNALIEPCEVELYTDSKYVVDGITKWVHGWKKRGWVNASKKPVRNDDLWHDLIEAELRHKVTWHWVKGHNGHAENERADRLASEAADLQS.

The RNase H type-1 domain occupies 1–141 (MKKVEIFTDG…ADRLASEAAD (141 aa)). Asp9, Glu47, Asp69, and Asp133 together coordinate Mg(2+).

Belongs to the RNase H family. Monomer. Mg(2+) serves as cofactor.

It is found in the cytoplasm. The catalysed reaction is Endonucleolytic cleavage to 5'-phosphomonoester.. Endonuclease that specifically degrades the RNA of RNA-DNA hybrids. This chain is Ribonuclease H, found in Erythrobacter litoralis (strain HTCC2594).